The chain runs to 330 residues: ADP-L-glycero-D-manno-heptose-6-epimerase (330 aa).

Residues 11–12, 32–33, Lys39, Lys54, 75–79, and Asn92 contribute to the NADP(+) site; these read FI, DN, and EGACS. The Proton acceptor role is filled by Tyr139. An NADP(+)-binding site is contributed by Lys143. Asn168 contacts substrate. The NADP(+) site is built by Val169 and Lys177. Lys177 functions as the Proton acceptor in the catalytic mechanism. Substrate is bound by residues Arg179, His186, 200-203, Arg213, and Tyr292; that span reads FGEY.

Belongs to the NAD(P)-dependent epimerase/dehydratase family. HldD subfamily. As to quaternary structure, homopentamer. It depends on NADP(+) as a cofactor.

It catalyses the reaction ADP-D-glycero-beta-D-manno-heptose = ADP-L-glycero-beta-D-manno-heptose. The protein operates within nucleotide-sugar biosynthesis; ADP-L-glycero-beta-D-manno-heptose biosynthesis; ADP-L-glycero-beta-D-manno-heptose from D-glycero-beta-D-manno-heptose 7-phosphate: step 4/4. Functionally, catalyzes the interconversion between ADP-D-glycero-beta-D-manno-heptose and ADP-L-glycero-beta-D-manno-heptose via an epimerization at carbon 6 of the heptose. The sequence is that of ADP-L-glycero-D-manno-heptose-6-epimerase from Burkholderia multivorans (strain ATCC 17616 / 249).